Reading from the N-terminus, the 721-residue chain is Rho GTPase-activating protein gacY (721 aa).

The interval 1–325 (MDSSFKRASF…PQQPQQQQST (325 aa)) is disordered. Residues 17 to 33 (NIDNINEMNNNNMNTAP) are compositionally biased toward low complexity. Residues 34 to 44 (APAPAPIPTPQ) show a composition bias toward pro residues. Positions 146–168 (DNNNNGNNNNNNNNNDNNNNNNN) are enriched in low complexity. A compositionally biased stretch (acidic residues) spans 169 to 181 (NDDDDEDEDDDEY). 2 stretches are compositionally biased toward polar residues: residues 182–202 (SNVS…NTMN) and 219–240 (KNDS…SSRR). Residues 308-323 (QQQQQPQQPQQPQQQQ) show a composition bias toward low complexity. The 158-residue stretch at 363 to 520 (KSQRFPEIEA…AIMMHRPAGK (158 aa)) folds into the CRAL-TRIO domain. Residues 528–719 (APLEDVINRP…LILDNINILF (192 aa)) enclose the Rho-GAP domain.

The protein localises to the cytoplasm. Its function is as follows. Rho GTPase-activating protein involved in the signal transduction pathway. The chain is Rho GTPase-activating protein gacY (gacY) from Dictyostelium discoideum (Social amoeba).